The following is a 453-amino-acid chain: Tubulin alpha chain (453 aa).

Q11 provides a ligand contact to GTP. Position 40 is an N6-acetyllysine (K40). E71, G144, T145, T179, N206, and N228 together coordinate GTP. E71 lines the Mg(2+) pocket. Residue E254 is part of the active site.

Belongs to the tubulin family. Dimer of alpha and beta chains. A typical microtubule is a hollow water-filled tube with an outer diameter of 25 nm and an inner diameter of 15 nM. Alpha-beta heterodimers associate head-to-tail to form protofilaments running lengthwise along the microtubule wall with the beta-tubulin subunit facing the microtubule plus end conferring a structural polarity. Microtubules usually have 13 protofilaments but different protofilament numbers can be found in some organisms and specialized cells. Mg(2+) serves as cofactor. Undergoes a tyrosination/detyrosination cycle, the cyclic removal and re-addition of a C-terminal tyrosine residue by the enzymes tubulin tyrosine carboxypeptidase (TTCP) and tubulin tyrosine ligase (TTL), respectively. In terms of processing, acetylation of alpha chains at Lys-40 stabilizes microtubules and affects affinity and processivity of microtubule motors. This modification has a role in multiple cellular functions, ranging from cell motility, cell cycle progression or cell differentiation to intracellular trafficking and signaling.

It is found in the cytoplasm. It localises to the cytoskeleton. It carries out the reaction GTP + H2O = GDP + phosphate + H(+). Functionally, tubulin is the major constituent of microtubules, a cylinder consisting of laterally associated linear protofilaments composed of alpha- and beta-tubulin heterodimers. Microtubules grow by the addition of GTP-tubulin dimers to the microtubule end, where a stabilizing cap forms. Below the cap, tubulin dimers are in GDP-bound state, owing to GTPase activity of alpha-tubulin. This Neospora caninum (Coccidian parasite) protein is Tubulin alpha chain (TUBA).